Reading from the N-terminus, the 156-residue chain is ATP synthase subunit b (156 aa).

The helical transmembrane segment at 11–31 (LIAFVVFVIFCMKYVWPPIIG) threads the bilayer.

It belongs to the ATPase B chain family. F-type ATPases have 2 components, F(1) - the catalytic core - and F(0) - the membrane proton channel. F(1) has five subunits: alpha(3), beta(3), gamma(1), delta(1), epsilon(1). F(0) has three main subunits: a(1), b(2) and c(10-14). The alpha and beta chains form an alternating ring which encloses part of the gamma chain. F(1) is attached to F(0) by a central stalk formed by the gamma and epsilon chains, while a peripheral stalk is formed by the delta and b chains.

The protein resides in the cell inner membrane. Functionally, f(1)F(0) ATP synthase produces ATP from ADP in the presence of a proton or sodium gradient. F-type ATPases consist of two structural domains, F(1) containing the extramembraneous catalytic core and F(0) containing the membrane proton channel, linked together by a central stalk and a peripheral stalk. During catalysis, ATP synthesis in the catalytic domain of F(1) is coupled via a rotary mechanism of the central stalk subunits to proton translocation. Component of the F(0) channel, it forms part of the peripheral stalk, linking F(1) to F(0). This Colwellia psychrerythraea (strain 34H / ATCC BAA-681) (Vibrio psychroerythus) protein is ATP synthase subunit b.